Here is a 411-residue protein sequence, read N- to C-terminus: Phosphoglycerate kinase (411 aa).

Residues 1–24 are disordered; it reads MTGLCPLHQPSPLDHPHSGGTPMQ. Residues 41-43, R56, 79-82, R139, and R172 each bind substrate; these read DYN and HFGR. ATP-binding positions include K222, G310, E341, and 369-372; that span reads GGDS.

It belongs to the phosphoglycerate kinase family. Monomer.

The protein localises to the cytoplasm. It catalyses the reaction (2R)-3-phosphoglycerate + ATP = (2R)-3-phospho-glyceroyl phosphate + ADP. Its pathway is carbohydrate degradation; glycolysis; pyruvate from D-glyceraldehyde 3-phosphate: step 2/5. The chain is Phosphoglycerate kinase from Deinococcus radiodurans (strain ATCC 13939 / DSM 20539 / JCM 16871 / CCUG 27074 / LMG 4051 / NBRC 15346 / NCIMB 9279 / VKM B-1422 / R1).